The primary structure comprises 852 residues: Polyphosphate kinase (852 aa).

2 disordered regions span residues 1–36 (MATG…DRPI) and 58–82 (SHDP…SRRK). Over residues 20 to 36 (VARDHPGCGPHRLDRPI) the composition is skewed to basic and acidic residues. A compositionally biased stretch (polar residues) spans 58-67 (SHDPAPSQSV). Asparagine 131 contacts ATP. Residues 251–303 (GDEIGPQRTPPPSDSLDNRVPSNLKRNSDTANQQPTPAENISAPEDGAEQTEP) are disordered. Positions 258–303 (RTPPPSDSLDNRVPSNLKRNSDTANQQPTPAENISAPEDGAEQTEP) are insert. Positions 270 to 289 (VPSNLKRNSDTANQQPTPAE) are enriched in polar residues. Mg(2+)-binding residues include arginine 524 and arginine 554. The active-site Phosphohistidine intermediate is histidine 584. ATP contacts are provided by tyrosine 617, arginine 713, and histidine 741.

The protein belongs to the polyphosphate kinase 1 (PPK1) family. Mg(2+) is required as a cofactor. In terms of processing, an intermediate of this reaction is the autophosphorylated ppk in which a phosphate is covalently linked to a histidine residue through a N-P bond.

It carries out the reaction [phosphate](n) + ATP = [phosphate](n+1) + ADP. Its function is as follows. Catalyzes the reversible transfer of the terminal phosphate of ATP to form a long-chain polyphosphate (polyP). This Rhodopirellula baltica (strain DSM 10527 / NCIMB 13988 / SH1) protein is Polyphosphate kinase.